The following is a 49-amino-acid chain: Large ribosomal subunit protein bL32c (49 aa).

A disordered region spans residues 1-23 (MTPKKRKSKSKKNLRKTNWKKKA).

The protein belongs to the bacterial ribosomal protein bL32 family.

Its subcellular location is the plastid. The protein resides in the chloroplast. The protein is Large ribosomal subunit protein bL32c of Oltmannsiellopsis viridis (Marine flagellate).